A 422-amino-acid chain; its full sequence is UDP-N-acetylglucosamine 1-carboxyvinyltransferase (422 aa).

22–23 (KN) serves as a coordination point for phosphoenolpyruvate. R93 contacts UDP-N-acetyl-alpha-D-glucosamine. The active-site Proton donor is C117. At C117 the chain carries 2-(S-cysteinyl)pyruvic acid O-phosphothioketal. Residues 122–126 (RPVDL), D308, and L330 each bind UDP-N-acetyl-alpha-D-glucosamine.

Belongs to the EPSP synthase family. MurA subfamily.

It is found in the cytoplasm. It catalyses the reaction phosphoenolpyruvate + UDP-N-acetyl-alpha-D-glucosamine = UDP-N-acetyl-3-O-(1-carboxyvinyl)-alpha-D-glucosamine + phosphate. The protein operates within cell wall biogenesis; peptidoglycan biosynthesis. Cell wall formation. Adds enolpyruvyl to UDP-N-acetylglucosamine. This chain is UDP-N-acetylglucosamine 1-carboxyvinyltransferase, found in Helicobacter pylori (strain P12).